The sequence spans 777 residues: Kelch domain-containing protein 7A (777 aa).

Residues 21-38 traverse the membrane as a helical segment; sequence VVLSAAALLLVTVAYRLY. A disordered region spans residues 43–207; the sequence is APAQRWGGNG…GLGQLEPPHC (165 aa). Serine 86 is modified (phosphoserine). Over residues 113–127 the composition is skewed to basic and acidic residues; sequence TDRKPQRKGSGEERG. The N-linked (GlcNAc...) asparagine glycan is linked to asparagine 257. The disordered stretch occupies residues 313-359; the sequence is LTEVPSPRPPPGSLGTGAASGGQAGDTKGAAERAASPQTGPWPSTRG. Positions 326–336 are enriched in gly residues; sequence LGTGAASGGQA. Kelch repeat units lie at residues 328–374, 492–538, 541–589, 590–632, and 635–677; these read TGAA…ENPE, QYLV…ICSL, YLFV…ALDG, HLYA…ATVR, and EIFV…AVNG. The residue at position 365 (serine 365) is a Phosphoserine.

The protein localises to the membrane. This chain is Kelch domain-containing protein 7A (KLHDC7A), found in Homo sapiens (Human).